Here is a 268-residue protein sequence, read N- to C-terminus: L-aspartate dehydrogenase (268 aa).

Residues A125 and N191 each contribute to the NAD(+) site. H221 is a catalytic residue.

The protein belongs to the L-aspartate dehydrogenase family.

It carries out the reaction L-aspartate + NADP(+) + H2O = oxaloacetate + NH4(+) + NADPH + H(+). It catalyses the reaction L-aspartate + NAD(+) + H2O = oxaloacetate + NH4(+) + NADH + H(+). Its pathway is cofactor biosynthesis; NAD(+) biosynthesis; iminoaspartate from L-aspartate (dehydrogenase route): step 1/1. Functionally, specifically catalyzes the NAD or NADP-dependent dehydrogenation of L-aspartate to iminoaspartate. This chain is L-aspartate dehydrogenase, found in Ralstonia nicotianae (strain ATCC BAA-1114 / GMI1000) (Ralstonia solanacearum).